Here is a 297-residue protein sequence, read N- to C-terminus: tRNA pseudouridine synthase B (297 aa).

Residue Asp-39 is the Nucleophile of the active site.

It belongs to the pseudouridine synthase TruB family. Type 1 subfamily.

The enzyme catalyses uridine(55) in tRNA = pseudouridine(55) in tRNA. In terms of biological role, responsible for synthesis of pseudouridine from uracil-55 in the psi GC loop of transfer RNAs. This chain is tRNA pseudouridine synthase B, found in Lactobacillus johnsonii (strain CNCM I-12250 / La1 / NCC 533).